A 690-amino-acid chain; its full sequence is Elongation factor G (690 aa).

One can recognise a tr-type G domain in the interval 8-282; it reads DKVRNIGIMA…AIVNYLPSPL (275 aa). Residues 17–24, 81–85, and 135–138 each bind GTP; these read AHIDAGKT, DTPGH, and NKMD.

This sequence belongs to the TRAFAC class translation factor GTPase superfamily. Classic translation factor GTPase family. EF-G/EF-2 subfamily.

It localises to the cytoplasm. Functionally, catalyzes the GTP-dependent ribosomal translocation step during translation elongation. During this step, the ribosome changes from the pre-translocational (PRE) to the post-translocational (POST) state as the newly formed A-site-bound peptidyl-tRNA and P-site-bound deacylated tRNA move to the P and E sites, respectively. Catalyzes the coordinated movement of the two tRNA molecules, the mRNA and conformational changes in the ribosome. This chain is Elongation factor G, found in Caldanaerobacter subterraneus subsp. tengcongensis (strain DSM 15242 / JCM 11007 / NBRC 100824 / MB4) (Thermoanaerobacter tengcongensis).